Reading from the N-terminus, the 360-residue chain is Photosystem II protein D1 (360 aa).

3 consecutive transmembrane segments (helical) span residues 29-46, 118-133, and 142-156; these read YIGW…TATT, HFLL…EWEL, and WICV…AATA. His-118 contacts chlorophyll a. Tyr-126 contacts pheophytin a. Residues Asp-170 and Glu-189 each coordinate [CaMn4O5] cluster. The helical transmembrane segment at 197–218 threads the bilayer; that stretch reads FHMAGVAGVFGGALFSAMHGSL. Chlorophyll a is bound at residue His-198. A quinone is bound by residues His-215 and 264 to 265; that span reads SF. Residue His-215 coordinates Fe cation. His-272 contacts Fe cation. The helical transmembrane segment at 274-288 threads the bilayer; the sequence is FLGLWPVVGIWLTSI. The [CaMn4O5] cluster site is built by His-332, Glu-333, Asp-342, and Ala-344. A propeptide spanning residues 345-360 is cleaved from the precursor; it reads DNSLLPVASSSPSINS.

Belongs to the reaction center PufL/M/PsbA/D family. PSII is composed of 1 copy each of membrane proteins PsbA, PsbB, PsbC, PsbD, PsbE, PsbF, PsbH, PsbI, PsbJ, PsbK, PsbL, PsbM, PsbT, PsbY, PsbZ, Psb30/Ycf12, at least 3 peripheral proteins of the oxygen-evolving complex and a large number of cofactors. It forms dimeric complexes. The cofactor is The D1/D2 heterodimer binds P680, chlorophylls that are the primary electron donor of PSII, and subsequent electron acceptors. It shares a non-heme iron and each subunit binds pheophytin, quinone, additional chlorophylls, carotenoids and lipids. D1 provides most of the ligands for the Mn4-Ca-O5 cluster of the oxygen-evolving complex (OEC). There is also a Cl(-1) ion associated with D1 and D2, which is required for oxygen evolution. The PSII complex binds additional chlorophylls, carotenoids and specific lipids.. In terms of processing, tyr-161 forms a radical intermediate that is referred to as redox-active TyrZ, YZ or Y-Z.

The protein localises to the plastid. Its subcellular location is the chloroplast thylakoid membrane. It catalyses the reaction 2 a plastoquinone + 4 hnu + 2 H2O = 2 a plastoquinol + O2. Photosystem II (PSII) is a light-driven water:plastoquinone oxidoreductase that uses light energy to abstract electrons from H(2)O, generating O(2) and a proton gradient subsequently used for ATP formation. It consists of a core antenna complex that captures photons, and an electron transfer chain that converts photonic excitation into a charge separation. The D1/D2 (PsbA/PsbD) reaction center heterodimer binds P680, the primary electron donor of PSII as well as several subsequent electron acceptors. The protein is Photosystem II protein D1 of Cyanidium caldarium (Red alga).